The chain runs to 282 residues: Biotin synthase (282 aa).

A Radical SAM core domain is found at 1 to 228 (MQEIFLCSIS…NARLMAAGGR (228 aa)). Residues cysteine 17, cysteine 21, and cysteine 24 each coordinate [4Fe-4S] cluster. [2Fe-2S] cluster is bound by residues cysteine 61, cysteine 96, cysteine 154, and arginine 221.

This sequence belongs to the radical SAM superfamily. Biotin synthase family. As to quaternary structure, homodimer. The cofactor is [4Fe-4S] cluster. It depends on [2Fe-2S] cluster as a cofactor.

It carries out the reaction (4R,5S)-dethiobiotin + (sulfur carrier)-SH + 2 reduced [2Fe-2S]-[ferredoxin] + 2 S-adenosyl-L-methionine = (sulfur carrier)-H + biotin + 2 5'-deoxyadenosine + 2 L-methionine + 2 oxidized [2Fe-2S]-[ferredoxin]. It functions in the pathway cofactor biosynthesis; biotin biosynthesis; biotin from 7,8-diaminononanoate: step 2/2. Its function is as follows. Catalyzes the conversion of dethiobiotin (DTB) to biotin by the insertion of a sulfur atom into dethiobiotin via a radical-based mechanism. This Helicobacter acinonychis (strain Sheeba) protein is Biotin synthase.